The chain runs to 208 residues: MARLNVKPTRMELSNLKNRLKTATRGHKLLKDKRDELMRRFVDLIRENNELRQTIEKELAANMKEFVLAKASENSLMVEELFAVPVHEVTLWIDIENIMSVNVPKFHVQSNTAREQEQGEFAYSYLSSNSEMDNTIQKTKELLEKLLRLAEVEKTCQLMADDIEKTRRRVNGLEYSIIPQLEETIHYIELKLEEAERASLVRIMKITS.

Belongs to the V-ATPase D subunit family.

Its function is as follows. Produces ATP from ADP in the presence of a proton gradient across the membrane. This chain is V-type ATP synthase subunit D, found in Streptococcus pyogenes serotype M49 (strain NZ131).